The chain runs to 256 residues: Acetyl-coenzyme A carboxylase carboxyl transferase subunit alpha (256 aa).

The region spanning Met-1–Glu-236 is the CoA carboxyltransferase C-terminal domain.

It belongs to the AccA family. Acetyl-CoA carboxylase is a heterohexamer composed of biotin carboxyl carrier protein (AccB), biotin carboxylase (AccC) and two subunits each of ACCase subunit alpha (AccA) and ACCase subunit beta (AccD).

It localises to the cytoplasm. It catalyses the reaction N(6)-carboxybiotinyl-L-lysyl-[protein] + acetyl-CoA = N(6)-biotinyl-L-lysyl-[protein] + malonyl-CoA. The protein operates within lipid metabolism; malonyl-CoA biosynthesis; malonyl-CoA from acetyl-CoA: step 1/1. Its function is as follows. Component of the acetyl coenzyme A carboxylase (ACC) complex. First, biotin carboxylase catalyzes the carboxylation of biotin on its carrier protein (BCCP) and then the CO(2) group is transferred by the carboxyltransferase to acetyl-CoA to form malonyl-CoA. The sequence is that of Acetyl-coenzyme A carboxylase carboxyl transferase subunit alpha from Streptococcus thermophilus (strain ATCC BAA-250 / LMG 18311).